Reading from the N-terminus, the 141-residue chain is Holo-[acyl-carrier-protein] synthase (141 aa).

Mg(2+) is bound by residues aspartate 7 and glutamate 57.

Belongs to the P-Pant transferase superfamily. AcpS family. Mg(2+) serves as cofactor.

It is found in the cytoplasm. It carries out the reaction apo-[ACP] + CoA = holo-[ACP] + adenosine 3',5'-bisphosphate + H(+). In terms of biological role, transfers the 4'-phosphopantetheine moiety from coenzyme A to a Ser of acyl-carrier-protein. In Corynebacterium efficiens (strain DSM 44549 / YS-314 / AJ 12310 / JCM 11189 / NBRC 100395), this protein is Holo-[acyl-carrier-protein] synthase.